Here is a 536-residue protein sequence, read N- to C-terminus: CTP synthase (536 aa).

The interval 1-268 (MSFKSIFLTG…VDFLLSKFGF (268 aa)) is amidoligase domain. Ser-14 contributes to the CTP binding site. Residue Ser-14 participates in UTP binding. 15–20 (SLGKGL) is a binding site for ATP. Tyr-55 contacts L-glutamine. Asp-72 contributes to the ATP binding site. Mg(2+) contacts are provided by Asp-72 and Glu-142. Residues 149 to 151 (DIE), 188 to 193 (KTKPTQ), and Lys-224 each bind CTP. Residues 188 to 193 (KTKPTQ) and Lys-224 each bind UTP. The 239-residue stretch at 294–532 (RIGLVGKYLE…LSAALDYSLE (239 aa)) folds into the Glutamine amidotransferase type-1 domain. Residue Gly-353 participates in L-glutamine binding. Cys-380 (nucleophile; for glutamine hydrolysis) is an active-site residue. Residues 381–384 (LGMQ), Glu-404, and Arg-460 contribute to the L-glutamine site. Residues His-505 and Glu-507 contribute to the active site.

It belongs to the CTP synthase family. In terms of assembly, homotetramer.

It catalyses the reaction UTP + L-glutamine + ATP + H2O = CTP + L-glutamate + ADP + phosphate + 2 H(+). The catalysed reaction is L-glutamine + H2O = L-glutamate + NH4(+). It carries out the reaction UTP + NH4(+) + ATP = CTP + ADP + phosphate + 2 H(+). It participates in pyrimidine metabolism; CTP biosynthesis via de novo pathway; CTP from UDP: step 2/2. Allosterically activated by GTP, when glutamine is the substrate; GTP has no effect on the reaction when ammonia is the substrate. The allosteric effector GTP functions by stabilizing the protein conformation that binds the tetrahedral intermediate(s) formed during glutamine hydrolysis. Inhibited by the product CTP, via allosteric rather than competitive inhibition. Catalyzes the ATP-dependent amination of UTP to CTP with either L-glutamine or ammonia as the source of nitrogen. Regulates intracellular CTP levels through interactions with the four ribonucleotide triphosphates. The chain is CTP synthase from Chlamydia muridarum (strain MoPn / Nigg).